Reading from the N-terminus, the 126-residue chain is Nascent polypeptide-associated complex protein (126 aa).

An NAC-A/B domain is found at 10–77 (PRMMKQMQKM…AKKVAKEEEK (68 aa)).

It belongs to the NAC-alpha family. Homodimer. Interacts with the ribosome. Binds ribosomal RNA.

In terms of biological role, contacts the emerging nascent chain on the ribosome. This chain is Nascent polypeptide-associated complex protein, found in Methanococcus maripaludis (strain DSM 14266 / JCM 13030 / NBRC 101832 / S2 / LL).